The chain runs to 259 residues: Triosephosphate isomerase (259 aa).

10–12 (NWK) provides a ligand contact to substrate. His102 (electrophile) is an active-site residue. Glu174 serves as the catalytic Proton acceptor. Substrate is bound by residues Gly180, Ser220, and 241–242 (GG).

Belongs to the triosephosphate isomerase family. In terms of assembly, homodimer.

It localises to the cytoplasm. The enzyme catalyses D-glyceraldehyde 3-phosphate = dihydroxyacetone phosphate. It functions in the pathway carbohydrate biosynthesis; gluconeogenesis. It participates in carbohydrate degradation; glycolysis; D-glyceraldehyde 3-phosphate from glycerone phosphate: step 1/1. Functionally, involved in the gluconeogenesis. Catalyzes stereospecifically the conversion of dihydroxyacetone phosphate (DHAP) to D-glyceraldehyde-3-phosphate (G3P). This is Triosephosphate isomerase from Cutibacterium acnes (strain DSM 16379 / KPA171202) (Propionibacterium acnes).